The primary structure comprises 903 residues: Translation initiation factor IF-2 (903 aa).

Disordered stretches follow at residues 57 to 171 (EKFK…QRRR) and 267 to 318 (PTPQ…EAVT). A compositionally biased stretch (basic and acidic residues) spans 69-163 (KKEAKEPSEK…SEPQKPKESL (95 aa)). Over residues 267–278 (PTPQPMQKTKQP) the composition is skewed to low complexity. The span at 299–308 (RRARKKHKKP) shows a compositional bias: basic residues. One can recognise a tr-type G domain in the interval 402–569 (PRAPVITIMG…IVLLQAEILE (168 aa)). The tract at residues 411 to 418 (GHVDHGKT) is G1. Position 411–418 (411–418 (GHVDHGKT)) interacts with GTP. The interval 436-440 (GITQH) is G2. The G3 stretch occupies residues 457-460 (DTPG). GTP-binding positions include 457–461 (DTPGH) and 511–514 (NKMD). The G4 stretch occupies residues 511-514 (NKMD). The segment at 547–549 (SAK) is G5.

This sequence belongs to the TRAFAC class translation factor GTPase superfamily. Classic translation factor GTPase family. IF-2 subfamily.

It is found in the cytoplasm. Its function is as follows. One of the essential components for the initiation of protein synthesis. Protects formylmethionyl-tRNA from spontaneous hydrolysis and promotes its binding to the 30S ribosomal subunits. Also involved in the hydrolysis of GTP during the formation of the 70S ribosomal complex. The chain is Translation initiation factor IF-2 from Campylobacter curvus (strain 525.92).